Here is a 223-residue protein sequence, read N- to C-terminus: Large ribosomal subunit protein bL25 (223 aa).

Belongs to the bacterial ribosomal protein bL25 family. CTC subfamily. In terms of assembly, part of the 50S ribosomal subunit; part of the 5S rRNA/L5/L18/L25 subcomplex. Contacts the 5S rRNA. Binds to the 5S rRNA independently of L5 and L18.

Its function is as follows. This is one of the proteins that binds to the 5S RNA in the ribosome where it forms part of the central protuberance. This is Large ribosomal subunit protein bL25 from Albidiferax ferrireducens (strain ATCC BAA-621 / DSM 15236 / T118) (Rhodoferax ferrireducens).